A 673-amino-acid chain; its full sequence is Transcription initiation factor IIB (673 aa).

Residues 38–69 (EEIVCPICGSKEVVKDYERAEIVCAKCGCVIK) form a TFIIB-type zinc finger. Residues C42, C45, C61, and C64 each contribute to the Zn(2+) site. One can recognise a DOD-type homing endonuclease domain in the interval 238-357 (ILGYIIAEGY…VIFLLLQIKE (120 aa)). Tandem repeats lie at residues 490 to 573 (SELD…AREL) and 584 to 665 (DYVP…ELTE).

This sequence belongs to the TFIIB family. In terms of processing, this protein undergoes a protein self splicing that involves a post-translational excision of the intervening region (intein) followed by peptide ligation.

Stabilizes TBP binding to an archaeal box-A promoter. Also responsible for recruiting RNA polymerase II to the pre-initiation complex (DNA-TBP-TFIIB). This Methanocaldococcus jannaschii (strain ATCC 43067 / DSM 2661 / JAL-1 / JCM 10045 / NBRC 100440) (Methanococcus jannaschii) protein is Transcription initiation factor IIB (tfb).